A 411-amino-acid polypeptide reads, in one-letter code: Branched-chain-amino-acid aminotransferase, cytosolic (411 aa).

An N6-(pyridoxal phosphate)lysine modification is found at lysine 247.

It belongs to the class-IV pyridoxal-phosphate-dependent aminotransferase family. As to quaternary structure, homodimer. It depends on pyridoxal 5'-phosphate as a cofactor. Post-translationally, the N-terminus is blocked. In terms of tissue distribution, brain, low expression in ovary and placenta, but not found in liver, kidney, and skeletal muscle.

The protein localises to the cytoplasm. It carries out the reaction L-leucine + 2-oxoglutarate = 4-methyl-2-oxopentanoate + L-glutamate. It catalyses the reaction L-isoleucine + 2-oxoglutarate = (S)-3-methyl-2-oxopentanoate + L-glutamate. The enzyme catalyses L-valine + 2-oxoglutarate = 3-methyl-2-oxobutanoate + L-glutamate. Its function is as follows. Catalyzes the first reaction in the catabolism of the essential branched chain amino acids leucine, isoleucine, and valine. This Rattus norvegicus (Rat) protein is Branched-chain-amino-acid aminotransferase, cytosolic (Bcat1).